Reading from the N-terminus, the 276-residue chain is Diaminopimelate epimerase (276 aa).

Residues asparagine 13, glutamine 46, and asparagine 66 each coordinate substrate. Cysteine 75 serves as the catalytic Proton donor. Substrate is bound by residues 76 to 77 (GN), asparagine 159, asparagine 192, and 210 to 211 (ER). The active-site Proton acceptor is the cysteine 219. Position 220–221 (220–221 (GT)) interacts with substrate.

It belongs to the diaminopimelate epimerase family. Homodimer.

Its subcellular location is the cytoplasm. It carries out the reaction (2S,6S)-2,6-diaminopimelate = meso-2,6-diaminopimelate. It participates in amino-acid biosynthesis; L-lysine biosynthesis via DAP pathway; DL-2,6-diaminopimelate from LL-2,6-diaminopimelate: step 1/1. Its function is as follows. Catalyzes the stereoinversion of LL-2,6-diaminopimelate (L,L-DAP) to meso-diaminopimelate (meso-DAP), a precursor of L-lysine and an essential component of the bacterial peptidoglycan. This is Diaminopimelate epimerase from Pseudomonas aeruginosa (strain UCBPP-PA14).